The sequence spans 751 residues: Disintegrin and metalloproteinase domain-containing protein 2 (751 aa).

An N-terminal signal peptide occupies residues 1 to 16 (MLRVLFLLCGLSGLRT). A propeptide spanning residues 17-173 (KENSERLHVQ…PYKVQSVQPR (157 aa)) is cleaved from the precursor. The Extracellular segment spans residues 17 to 702 (KENSERLHVQ…DVYQTAKPTR (686 aa)). Asn122, Asn147, Asn219, and Asn289 each carry an N-linked (GlcNAc...) asparagine glycan. The Peptidase M12B domain maps to 177–374 (QYIEMHVVVE…QKSQCLQNLP (198 aa)). Cystine bridges form between Cys286-Cys369, Cys328-Cys353, and Cys330-Cys335. N-linked (GlcNAc...) asparagine glycosylation is found at Asn352, Asn434, Asn458, Asn559, and Asn566. The Disintegrin domain maps to 383–472 (DAVCGNSIVE…LCPDDIVIQN (90 aa)). Cys444 and Cys464 are oxidised to a cystine. The region spanning 612–645 (VNLGCTLQNCNNQGICNSLQHCHCNPTFLPPNCS) is the EGF-like domain. 3 disulfides stabilise this stretch: Cys616–Cys627, Cys621–Cys633, and Cys635–Cys644. N-linked (GlcNAc...) asparagine glycosylation is present at Asn643. Residues 703–723 (WPFFLLIPFFIILGALIAILV) form a helical membrane-spanning segment. Residues 724–751 (KVQFQRKKWKTEDYTSDEQFESDSELKE) are Cytoplasmic-facing. At Ser745 the chain carries Phosphoserine.

In terms of assembly, heterodimer with ADAM1/fertilin subunit alpha. Post-translationally, the signal and the metalloprotease domain are cleaved during the epididymal maturation of the spermatozoa. As to expression, expressed specifically in testis.

It localises to the membrane. In terms of biological role, sperm surface membrane protein that may be involved in sperm-egg plasma membrane adhesion and fusion during fertilization. Could have a direct role in sperm-zona binding or migration of sperm from the uterus into the oviduct. Interactions with egg membrane could be mediated via binding between its disintegrin-like domain to one or more integrins receptors on the egg. This is a non catalytic metalloprotease-like protein. This chain is Disintegrin and metalloproteinase domain-containing protein 2 (ADAM2), found in Oryctolagus cuniculus (Rabbit).